Consider the following 512-residue polypeptide: Cytochrome P450 monooxygenase FrzL (512 aa).

A helical transmembrane segment spans residues 6-26; that stretch reads TMLAFVPYLAVFVACYGLVYY. Cysteine 423 lines the heme pocket.

It belongs to the cytochrome P450 family. Heme is required as a cofactor.

The protein resides in the membrane. Functionally, cytochrome P450 monooxygenase; part of the gene cluster that mediates the biosynthesis of the alkaloid (-)-FR901483, a potent immunosuppressant that shows efficacy in animal models and a probable inhibitor of purine nucleotide biosynthesis by targeting phosphoribosylpyrophosphate amidotransferase (PPAT). The only unassigned enzyme in the cluster is the second cytochrome P450 monooxygenase FrzL. The biosynthesis of (-)-FR901483 starts with the condensation of two L-tyrosines to yield (S,S)-dityrosyl-piperazine. This process occurs in 3 steps with the non-canonical nonribosomal peptide synthetase FrzA catalyzing the reduction of L-tyrosine into L-tyrosinal, the spontaneous condensation of 2 L-tyrosinal units, and the subsequent reduction by the NmrA-like family domain-containing oxidoreductase FrzB. The cytochrome P450 monooxygenase FrzC then performs coupling between N10 and C1' to morph the piperazine into a 1,4-diazabicyclo[3.2.1]octane spiro-fused to a 2,5-cyclohexadienone. The dienone portion is further reduced to cyclohexanone by the flavin-dependent reductase FrzD. The methyltranserases (MTs) FrzE and FrzF are then involved in the methylation at the C10' amine and the C4 phenolic oxygen, respectively. The order of the two MTs appear to be interchangeable. Cleavage of the C9-N10' bond by the dioxygenase FrzG then leads to formation of a conjugated iminium. In addition to the oxidation of C9, an additional dehydrogenation between C7 and C8 can occur to give a likely shunt product. The next biosynthetic step is the intramolecular aldol condensation catalyzed by the newly identified aldolase FrzH to yield an aza-tricyclic product with the formation of a C9-C3' bond. The short-chain dehydrogenase/reductase FrzI then produces dephospho-(-)-FR901483 that is phosphorylated at C4'-OH into (-)-FR901483 by the phosphotransferase FrzJ. The sequence is that of Cytochrome P450 monooxygenase FrzL from Cladobotryum sp.